Reading from the N-terminus, the 303-residue chain is Large ribosomal subunit protein uL18 (303 aa).

This sequence belongs to the universal ribosomal protein uL18 family. In terms of assembly, component of the large ribosomal subunit (LSU).

The protein localises to the cytoplasm. The protein resides in the nucleus. Functionally, component of the ribosome, a large ribonucleoprotein complex responsible for the synthesis of proteins in the cell. The small ribosomal subunit (SSU) binds messenger RNAs (mRNAs) and translates the encoded message by selecting cognate aminoacyl-transfer RNA (tRNA) molecules. The large subunit (LSU) contains the ribosomal catalytic site termed the peptidyl transferase center (PTC), which catalyzes the formation of peptide bonds, thereby polymerizing the amino acids delivered by tRNAs into a polypeptide chain. The nascent polypeptides leave the ribosome through a tunnel in the LSU and interact with protein factors that function in enzymatic processing, targeting, and the membrane insertion of nascent chains at the exit of the ribosomal tunnel. This chain is Large ribosomal subunit protein uL18 (RPL5), found in Oikopleura dioica (Tunicate).